The following is a 478-amino-acid chain: Phosphomannomutase (478 aa).

Residues 30–46 (FTPEVCARFTISFLTVM) traverse the membrane as a helical segment. Residue S111 is the Phosphoserine intermediate of the active site. S111, D245, D247, and D249 together coordinate Mg(2+). A helical transmembrane segment spans residues 265–284 (ILGLLCSLELAADAVAIPVS).

This sequence belongs to the phosphohexose mutase family. Requires Mg(2+) as cofactor.

The protein localises to the cell membrane. It carries out the reaction alpha-D-mannose 1-phosphate = D-mannose 6-phosphate. Its pathway is nucleotide-sugar biosynthesis; GDP-alpha-D-mannose biosynthesis; alpha-D-mannose 1-phosphate from D-fructose 6-phosphate: step 2/2. It participates in bacterial outer membrane biogenesis; LPS O-antigen biosynthesis. In terms of biological role, involved in GDP-mannose biosynthesis which serves as the activated sugar nucleotide precursor for mannose residues in cell surface polysaccharides. This enzyme participates in synthesis of the LPS group C2 O antigen. This Salmonella muenchen protein is Phosphomannomutase (manB).